Reading from the N-terminus, the 96-residue chain is Pyrimidine/purine nucleoside phosphorylase (96 aa).

The protein belongs to the nucleoside phosphorylase PpnP family.

It catalyses the reaction a purine D-ribonucleoside + phosphate = a purine nucleobase + alpha-D-ribose 1-phosphate. It carries out the reaction adenosine + phosphate = alpha-D-ribose 1-phosphate + adenine. The enzyme catalyses cytidine + phosphate = cytosine + alpha-D-ribose 1-phosphate. The catalysed reaction is guanosine + phosphate = alpha-D-ribose 1-phosphate + guanine. It catalyses the reaction inosine + phosphate = alpha-D-ribose 1-phosphate + hypoxanthine. It carries out the reaction thymidine + phosphate = 2-deoxy-alpha-D-ribose 1-phosphate + thymine. The enzyme catalyses uridine + phosphate = alpha-D-ribose 1-phosphate + uracil. The catalysed reaction is xanthosine + phosphate = alpha-D-ribose 1-phosphate + xanthine. Functionally, catalyzes the phosphorolysis of diverse nucleosides, yielding D-ribose 1-phosphate and the respective free bases. Can use uridine, adenosine, guanosine, cytidine, thymidine, inosine and xanthosine as substrates. Also catalyzes the reverse reactions. This is Pyrimidine/purine nucleoside phosphorylase from Serratia proteamaculans (strain 568).